The primary structure comprises 127 residues: Glycine cleavage system H protein (127 aa).

Residues 22-104 (QVVIGITHFA…YEGAWMVKVE (83 aa)) enclose the Lipoyl-binding domain. The residue at position 63 (Lys-63) is an N6-lipoyllysine.

Belongs to the GcvH family. The glycine cleavage system is composed of four proteins: P, T, L and H. The cofactor is (R)-lipoate.

In terms of biological role, the glycine cleavage system catalyzes the degradation of glycine. The H protein shuttles the methylamine group of glycine from the P protein to the T protein. Is also involved in protein lipoylation via its role as an octanoyl/lipoyl carrier protein intermediate. The chain is Glycine cleavage system H protein from Bacillus cytotoxicus (strain DSM 22905 / CIP 110041 / 391-98 / NVH 391-98).